The chain runs to 368 residues: Tubby-like F-box protein 2 (368 aa).

Positions 1–17 (MVPWRRSSSSSSAPSSR) are enriched in low complexity. A disordered region spans residues 1-44 (MVPWRRSSSSSSAPSSRPARRPARTNARVSPDVSSELSPLAGEE). In terms of domain architecture, F-box spans 49-104 (ERWSALVPDLLADILRCVEAGSERWPPRRDVVACASVCRRWRDVAVAVVQPPLESG).

The protein belongs to the TUB family. Expressed in stems, leaves, flowers and seeds.

The protein is Tubby-like F-box protein 2 (TULP2) of Oryza sativa subsp. japonica (Rice).